The primary structure comprises 274 residues: 3',5'-cyclic adenosine monophosphate phosphodiesterase CpdA (274 aa).

Fe cation-binding residues include Asp21, His23, Asp63, Asn93, His163, His202, and His204. AMP-binding positions include His23, Asp63, and Asn93–His94. Residue His204 participates in AMP binding.

The protein belongs to the cyclic nucleotide phosphodiesterase class-III family. Fe(2+) is required as a cofactor.

The enzyme catalyses 3',5'-cyclic AMP + H2O = AMP + H(+). In terms of biological role, hydrolyzes cAMP to 5'-AMP. Plays an important regulatory role in modulating the intracellular concentration of cAMP, thereby influencing cAMP-dependent processes. May coordinate responses to nutritional stress, ensuring optimal competence development. The polypeptide is 3',5'-cyclic adenosine monophosphate phosphodiesterase CpdA (Haemophilus influenzae (strain ATCC 51907 / DSM 11121 / KW20 / Rd)).